A 346-amino-acid polypeptide reads, in one-letter code: Glycerol-1-phosphate dehydrogenase [NAD(P)+] (346 aa).

NAD(+) is bound by residues 93-97 and 115-118; these read GSIID and TTAS. Asp120 provides a ligand contact to substrate. Position 124 (Ser124) interacts with NAD(+). Asp167 contacts substrate. The Zn(2+) site is built by Asp167 and His247. His251 lines the substrate pocket. His263 serves as a coordination point for Zn(2+).

Belongs to the glycerol-1-phosphate dehydrogenase family. Zn(2+) is required as a cofactor.

The protein localises to the cytoplasm. It catalyses the reaction sn-glycerol 1-phosphate + NAD(+) = dihydroxyacetone phosphate + NADH + H(+). It carries out the reaction sn-glycerol 1-phosphate + NADP(+) = dihydroxyacetone phosphate + NADPH + H(+). The protein operates within membrane lipid metabolism; glycerophospholipid metabolism. Functionally, catalyzes the NAD(P)H-dependent reduction of dihydroxyacetonephosphate (DHAP or glycerone phosphate) to glycerol 1-phosphate (G1P). The G1P thus generated is used as the glycerophosphate backbone of phospholipids in the cellular membranes of Archaea. The chain is Glycerol-1-phosphate dehydrogenase [NAD(P)+] from Pyrococcus abyssi (strain GE5 / Orsay).